Here is a 249-residue protein sequence, read N- to C-terminus: Triosephosphate isomerase (249 aa).

Residue 8–10 (NWK) coordinates substrate. The Electrophile role is filled by histidine 95. Glutamate 163 (proton acceptor) is an active-site residue. Glycine 169 and serine 209 together coordinate substrate.

This sequence belongs to the triosephosphate isomerase family. Homodimer.

The protein localises to the cytoplasm. It carries out the reaction D-glyceraldehyde 3-phosphate = dihydroxyacetone phosphate. It functions in the pathway carbohydrate biosynthesis; gluconeogenesis. Its pathway is carbohydrate degradation; glycolysis; D-glyceraldehyde 3-phosphate from glycerone phosphate: step 1/1. Functionally, involved in the gluconeogenesis. Catalyzes stereospecifically the conversion of dihydroxyacetone phosphate (DHAP) to D-glyceraldehyde-3-phosphate (G3P). The sequence is that of Triosephosphate isomerase from Orientia tsutsugamushi (strain Boryong) (Rickettsia tsutsugamushi).